The following is a 2479-amino-acid chain: Centrosomal protein of 290 kDa (2479 aa).

Residues Met-1–Phe-695 form a self-association (with itself or C-terminus) region. Coiled-coil stretches lie at residues Met-59–Lys-565, Ser-598–Asp-664, Ala-697–Lys-931, Ser-958–Ala-1027, Gln-1071–Arg-1498, His-1533–Leu-1584, and Asp-1635–Leu-2452. Basic and acidic residues predominate over residues Ala-149–Arg-163. The disordered stretch occupies residues Ala-149 to Arg-168. The interval Asp-696–Leu-896 is interaction with IQCB1. A self-association (with itself or N-terminus) region spans residues Thr-1966–Tyr-2479. Positions Ser-2458 to Tyr-2479 are disordered.

Part of the tectonic-like complex (also named B9 complex). Interacts with ATF4 via its N-terminal region. Associates with the BBSome complex, interacting (via N-terminus) with BBS4. Interacts with IQCB1/NPHP5; IQCB1 and CEP290/NPHP6 are proposed to form a functional NPHP5-6 module localized to the centrosome. Interacts with NPHP4; the interaction likely requires additional interactors. Interacts with ZNF423, FAM161A, CEP162, CEP162, CEP131, TALPID3, CCDC13, CC2D2A, RPGRIP1. Can self-associate (homo- or heteromeric). Interacts with CCP110; required for suppressing cilia formation. Interacts with RPGR. Associates (via C-terminus) with microtubules; association to microtubule is reduced in response to cellular stress, such as ultraviolet light (UV) radiation or heat shock, in a process that requires p38 MAP kinase signaling. Interacts with FAM161A. Interacts with PCM1. Interacts with CCDC66. Interacts with ARMC9 and CSPP1. Post-translationally, ubiquitinated. May undergo monoubiquitination; monoubiquitination is inhibited in response to cellular stress, such as ultraviolet light (UV) radiation or heat shock, but does not cause its displacement from centriolar satellites. In terms of tissue distribution, ubiquitous. Expressed strongly in placenta and weakly in brain.

The protein resides in the cytoplasm. It is found in the cytoskeleton. It localises to the microtubule organizing center. Its subcellular location is the centrosome. The protein localises to the centriolar satellite. The protein resides in the nucleus. It is found in the cell projection. It localises to the cilium. Its subcellular location is the cilium basal body. The protein localises to the centriole. The protein resides in the cytoplasmic vesicle. Functionally, involved in early and late steps in cilia formation. Its association with CCP110 is required for inhibition of primary cilia formation by CCP110. May play a role in early ciliogenesis in the disappearance of centriolar satellites and in the transition of primary ciliar vesicles (PCVs) to capped ciliary vesicles (CCVs). Required for the centrosomal recruitment of RAB8A and for the targeting of centriole satellite proteins to centrosomes such as of PCM1. Required for the correct localization of ciliary and phototransduction proteins in retinal photoreceptor cells; may play a role in ciliary transport processes. Required for efficient recruitment of RAB8A to primary cilium. In the ciliary transition zone is part of the tectonic-like complex which is required for tissue-specific ciliogenesis and may regulate ciliary membrane composition. Involved in regulation of the BBSome complex integrity, specifically for presence of BBS2, BBS5 and BBS8/TTC8 in the complex, and in ciliary targeting of selected BBSome cargos. May play a role in controlling entry of the BBSome complex to cilia possibly implicating IQCB1/NPHP5. Activates ATF4-mediated transcription. In Homo sapiens (Human), this protein is Centrosomal protein of 290 kDa (CEP290).